A 231-amino-acid chain; its full sequence is NADH-ubiquinone oxidoreductase chain 4 (231 aa).

The next 7 membrane-spanning stretches (helical) occupy residues 1 to 21, 34 to 54, 63 to 85, 89 to 111, 128 to 148, 156 to 176, and 211 to 231; these read PIAG…YGII, LFLP…LTCL, IAYS…TPWG, AMAL…NTTY, ILPM…AIPP, LLIM…LGLS, and LLIA…ELVI.

The protein belongs to the complex I subunit 4 family.

The protein localises to the mitochondrion membrane. It catalyses the reaction a ubiquinone + NADH + 5 H(+)(in) = a ubiquinol + NAD(+) + 4 H(+)(out). Core subunit of the mitochondrial membrane respiratory chain NADH dehydrogenase (Complex I) that is believed to belong to the minimal assembly required for catalysis. Complex I functions in the transfer of electrons from NADH to the respiratory chain. The immediate electron acceptor for the enzyme is believed to be ubiquinone. This chain is NADH-ubiquinone oxidoreductase chain 4 (MT-ND4), found in Crotalus adamanteus (Eastern diamondback rattlesnake).